Consider the following 362-residue polypeptide: Histidine protein methyltransferase 1 homolog (362 aa).

Positions 18-88 (TSLDDGTCVL…EACKHQPSWK (71 aa)) are disordered. A compositionally biased stretch (basic and acidic residues) spans 30–51 (QKGKQDKRQSTERPGLPRDHSW). The segment covering 52–65 (KCSSLGNAASSEDT) has biased composition (polar residues). A phosphoserine mark is found at serine 62 and serine 67. A compositionally biased stretch (basic and acidic residues) spans 73–82 (DRSDDPEACK). A Tele-methylhistidine modification is found at histidine 144. S-adenosyl-L-methionine-binding positions include 158-162 (IWECT), glycine 185, and 206-208 (QDY). A Nuclear localization signal motif is present at residues 237–243 (PDGKRQR). S-adenosyl-L-methionine contacts are provided by residues 259 to 261 (GEW) and serine 283.

Belongs to the methyltransferase superfamily. METTL18 family. Interacts with GRWD1 and members of the heat shock protein 90 and 70 families; these proteins may possibly be methylation substrates for the enzyme. Post-translationally, monomethylated at His-144 through automethylation. Automethylation at His-144 positively regulates the methyltransferase activity toward RPL3. Probably methylated on other residues.

Its subcellular location is the cytoplasm. It is found in the cytosol. The protein resides in the nucleus. It localises to the nucleolus. The catalysed reaction is L-histidyl-[protein] + S-adenosyl-L-methionine = N(tele)-methyl-L-histidyl-[protein] + S-adenosyl-L-homocysteine + H(+). Functionally, protein-L-histidine N-tele-methyltransferase that specifically monomethylates RPL3, thereby regulating translation elongation. Histidine methylation of RPL3 regulates translation elongation by slowing ribosome traversal on tyrosine codons: slower elongation provides enough time for proper folding of synthesized proteins and prevents cellular aggregation of tyrosine-rich proteins. The protein is Histidine protein methyltransferase 1 homolog of Mus musculus (Mouse).